Reading from the N-terminus, the 426-residue chain is Coiled-coil domain-containing protein 86 (426 aa).

The interval 1–426 is disordered; sequence MDTPLRRSRR…QPPQRPVAKV (426 aa). Ser18 carries the post-translational modification Phosphoserine. The segment covering 33 to 49 has biased composition (basic and acidic residues); sequence ALVDFKSNSEETGELKS. Pro residues predominate over residues 55–145; sequence LSLPSPGPQP…SLPSPGPQPE (91 aa). The residue at position 59 (Ser59) is a Phosphoserine. A Phosphothreonine modification is found at Thr66. Phosphoserine is present on residues Ser67, Ser70, Ser161, Ser172, Ser183, Ser191, Ser194, Ser225, Ser252, Ser253, and Ser283. Over residues 241 to 255 the composition is skewed to polar residues; sequence QPAQELTVQAPSSPE. The span at 304 to 320 shows a compositional bias: basic residues; it reads GKPKSGRVWKDRSKKRF. The span at 339 to 383 shows a compositional bias: basic and acidic residues; that stretch reads ERQERKLAKDFARHLEEEKQRRRQEKKERRAENLRRRLENERKAE. A coiled-coil region spans residues 346-389; sequence AKDFARHLEEEKQRRRQEKKERRAENLRRRLENERKAEIVQVIR. Over residues 392 to 402 the composition is skewed to basic residues; the sequence is AKLKKAKKKQL. Arg408 carries the citrulline modification.

Post-translationally, citrullinated by PADI4. Highly expressed in testis. Also expressed in heart, liver, kidney.

It is found in the nucleus. Its subcellular location is the chromosome. The protein resides in the nucleolus. In terms of biological role, required for proper chromosome segregation during mitosis and error-free mitotic progression. In Mus musculus (Mouse), this protein is Coiled-coil domain-containing protein 86.